Consider the following 967-residue polypeptide: Leucine-rich repeat-containing G-protein coupled receptor 6 (967 aa).

An N-terminal signal peptide occupies residues 1–24 (MPSPPGLRALWLCAALCASRRAGG). At 25–567 (APQPGPGPTA…LFESWGIRLA (543 aa)) the chain is on the extracellular side. One can recognise an LRRNT domain in the interval 26 to 66 (PQPGPGPTACPAPCHCQEDGIMLSADCSELGLSAVPGDLDP). Asn-77 carries N-linked (GlcNAc...) asparagine glycosylation. LRR repeat units lie at residues 91–112 (FLEE…AFSG), 115–136 (SLKI…ALWE), 139–160 (SLQS…SFEG), 163–186 (SLRH…NNLP), 187–208 (ALQA…AFQN), 211–232 (SLVV…SFEG), 235–256 (NLET…IRTL), 258–279 (RLQE…AFMG), 282–303 (LLQT…AFQY), 306–328 (KLHT…KGTT), 329–350 (SLEI…MCQQ), 353–374 (RLRV…HRCQ), 375–396 (KLEE…TFSQ), 399–420 (SLQA…AFST), and 423–443 (SLVK…AGLG). The N-linked (GlcNAc...) asparagine glycan is linked to Asn-208. A helical transmembrane segment spans residues 568–588 (VWAIVLLSVLCNGLVLLTVFA). The Cytoplasmic portion of the chain corresponds to 589 to 598 (GGPVPLPPVK). Residues 599 to 619 (FVVGAIAGANTLTGISCGLLA) traverse the membrane as a helical segment. The Extracellular portion of the chain corresponds to 620–644 (SVDALTFGQFSEYGARWETGLGCRA). Cysteines 642 and 717 form a disulfide. Residues 645 to 665 (TGFLAVLGSEASVLLLTLAAV) form a helical membrane-spanning segment. Residues 666–687 (QCSVSVSCVRAYGKSPSLGSVR) are Cytoplasmic-facing. A helical membrane pass occupies residues 688-708 (AGVLGCLALAGLAAALPLASV). Over 709 to 727 (GEYGASPLCLPYAPPEGQP) the chain is Extracellular. Residues 728-748 (AALGFTVALVMMNSFCFLVVA) form a helical membrane-spanning segment. Topologically, residues 749–774 (GAYIKLYCDLPRGDFEAVWDCAMVRH) are cytoplasmic. Residues 775 to 795 (VAWLIFADGLLYCPVAFLSFA) traverse the membrane as a helical segment. Over 796–809 (SMLGLFPVTPEAVK) the chain is Extracellular. A helical membrane pass occupies residues 810 to 830 (SVLLVVLPLPACLNPLLYLLF). The Cytoplasmic segment spans residues 831–967 (NPHFRDDLRR…PSGLAFASHV (137 aa)).

It belongs to the G-protein coupled receptor 1 family.

Its subcellular location is the cell membrane. Receptor for R-spondins that potentiates the canonical Wnt signaling pathway and acts as a marker of multipotent stem cells in the epidermis. Upon binding to R-spondins (RSPO1, RSPO2, RSPO3 or RSPO4), associates with phosphorylated LRP6 and frizzled receptors that are activated by extracellular Wnt receptors, triggering the canonical Wnt signaling pathway to increase expression of target genes. In contrast to classical G-protein coupled receptors, does not activate heterotrimeric G-proteins to transduce the signal. May act as a tumor suppressor. This Homo sapiens (Human) protein is Leucine-rich repeat-containing G-protein coupled receptor 6 (LGR6).